The primary structure comprises 542 residues: CTP synthase (542 aa).

Residues 1 to 265 (MARYVFITGG…DDEVLAAFGI (265 aa)) form an amidoligase domain region. Residue S13 coordinates CTP. S13 contributes to the UTP binding site. ATP is bound by residues 14-19 (SLGKGI) and D71. Mg(2+) contacts are provided by D71 and E139. Residues 146–148 (DIE), 186–191 (KTKPTQ), and K222 contribute to the CTP site. Residues 186–191 (KTKPTQ) and K222 each bind UTP. The Glutamine amidotransferase type-1 domain maps to 291 to 541 (TIAIVGKYTG…IEAATEQSRL (251 aa)). Residue G353 coordinates L-glutamine. C380 (nucleophile; for glutamine hydrolysis) is an active-site residue. L-glutamine contacts are provided by residues 381–384 (FGMQ), E404, and R469. Catalysis depends on residues H514 and E516.

It belongs to the CTP synthase family. As to quaternary structure, homotetramer.

It carries out the reaction UTP + L-glutamine + ATP + H2O = CTP + L-glutamate + ADP + phosphate + 2 H(+). The catalysed reaction is L-glutamine + H2O = L-glutamate + NH4(+). It catalyses the reaction UTP + NH4(+) + ATP = CTP + ADP + phosphate + 2 H(+). It functions in the pathway pyrimidine metabolism; CTP biosynthesis via de novo pathway; CTP from UDP: step 2/2. Its activity is regulated as follows. Allosterically activated by GTP, when glutamine is the substrate; GTP has no effect on the reaction when ammonia is the substrate. The allosteric effector GTP functions by stabilizing the protein conformation that binds the tetrahedral intermediate(s) formed during glutamine hydrolysis. Inhibited by the product CTP, via allosteric rather than competitive inhibition. In terms of biological role, catalyzes the ATP-dependent amination of UTP to CTP with either L-glutamine or ammonia as the source of nitrogen. Regulates intracellular CTP levels through interactions with the four ribonucleotide triphosphates. The chain is CTP synthase from Rhizobium etli (strain CIAT 652).